The sequence spans 1005 residues: MGVGGGGGGGGGEAAAAVAVEGDEAGKGRRWWRVKVKLSTVAVVAWVLASAALWAGLHWRFRRAALHKAEEALVCMCEERARMLQDQFAVSVNHVHALAILVATFHYDKHPPALDQDTFAVYAARTSFERPLLSGVAYAQRVVHADRESFERQQGWIIKTMKHEPSPAQDEYAPVIYSQETISYIEGLDVMSGEEDRENILRARATGKAVLTRPFRLMSNHLGVVLTFPVYLVDLPNDTAVEDRVAATAGYLGGAFDVESLVENLLRQLAGNQELVVNVYDVTNHSNPLVMYGSEVPLGIPSPSHTYTLDFGDPLRKHQMVCRYRNKLHVSWSAITTPSGVFVICMLVGYIIYAAWSRYDNVKEDCRKMEALKKRAEAADIAKSQFLATVSHEIRTPMNGVLGMLDMLLDTELKSTQRDYAQTAQVCGKALISLINEVLDRAKIEAGKIDLESVPFDLRSILDDVISLFSSKSREKGIELAVYVSERVPEILLGDPGRFRQIITNLVGNSIKFTERGHIFVQVHLADHSNLATEAKIEPVVNGMNGHKDEAIAIPTSGSHNTLSGFEAADSRNNWENFKLLLSYEKNEMPYESDSDKVTLVVSVEDTGIGIPLHAQGRVFTPFMQADSSTSRNYGGTGIGLSISKCLVEIMGGQINFVSRPLVGSTFTFTAVLRRCDKNAISDSKTVALHPLPSSFKGLSALLVDKRPVRATVTKYHLQRLGITSEVVGTIDPTFGVLSGRNGSSLTSIGKKQPCMLLIESDSWGPQMDVSLHARLQEMKQSDRIHVLPKVFLLSAAESDKVKKIHAVDSVIPKPLKASALAACLFQALGITQPSHEKRDDSGSLHGRDGSGSLHGLLLGKNILVVDDNKVNLRVAAGTLKKYGAKVECVESGKDALSLLQVPHKFDLCLMDIQMPEMDGFEATRQIRAMEGKANEQADDSESGSEIAAKTAKWHLPILAMTADVIQATHEECTKCGMDGYVSKPFEEKQLFQAVQKFLGPCVSS.

Residues 1 to 37 (MGVGGGGGGGGGEAAAAVAVEGDEAGKGRRWWRVKVK) are Cytoplasmic-facing. The chain crosses the membrane as a helical span at residues 38-58 (LSTVAVVAWVLASAALWAGLH). The Extracellular portion of the chain corresponds to 59–333 (WRFRRAALHK…YRNKLHVSWS (275 aa)). Residues 110 to 321 (HPPALDQDTF…GDPLRKHQMV (212 aa)) form the CHASE domain. A helical transmembrane segment spans residues 334–354 (AITTPSGVFVICMLVGYIIYA). At 355 to 1005 (AWSRYDNVKE…QKFLGPCVSS (651 aa)) the chain is on the cytoplasmic side. The 287-residue stretch at 389–675 (TVSHEIRTPM…TFTFTAVLRR (287 aa)) folds into the Histidine kinase domain. Histidine 392 is subject to Phosphohistidine; by autocatalysis. Response regulatory domains follow at residues 700 to 829 (SALL…FQAL) and 862 to 999 (NILV…QKFL). Aspartate 912 bears the 4-aspartylphosphate mark.

Activation probably requires a transfer of a phosphate group between a His in the transmitter domain and an Asp of the receiver domain. As to expression, highly expressed in young leaves and spikelets, and at lower levels in roots, mature leaves and stems.

The protein resides in the cell membrane. It carries out the reaction ATP + protein L-histidine = ADP + protein N-phospho-L-histidine.. Cytokinin receptor related to bacterial two-component regulators. Functions as a histidine kinase and transmits the stress signal to a downstream MAPK cascade. The polypeptide is Probable histidine kinase 4 (Oryza sativa subsp. japonica (Rice)).